Consider the following 327-residue polypeptide: Probable cell division protein WhiA (327 aa).

The H-T-H motif DNA-binding region spans 275 to 308 (SLEELGQLADPPMTKDAVAGRIRRLLSMADRKAK). The segment at 306–327 (KAKETGIPDTESAVTADLLDDA) is disordered.

This sequence belongs to the WhiA family.

Involved in cell division and chromosome segregation. This Rhodococcus jostii (strain RHA1) protein is Probable cell division protein WhiA.